The primary structure comprises 172 residues: Putative phosphoesterase BCE_1348 (172 aa).

The active-site Proton donor is the histidine 34. Short sequence motifs (HXTX) lie at residues 34-37 (HITL) and 115-118 (HLTI). The active-site Proton acceptor is the histidine 115.

The protein belongs to the 2H phosphoesterase superfamily. YjcG family.

The protein is Putative phosphoesterase BCE_1348 of Bacillus cereus (strain ATCC 10987 / NRS 248).